Consider the following 477-residue polypeptide: Cysteine--tRNA ligase (477 aa).

Residue Cys-42 coordinates Zn(2+). Residues 44–54 carry the 'HIGH' region motif; the sequence is ATVQGLPHIGH. Zn(2+) contacts are provided by Cys-220, His-245, and Glu-249. Positions 276 to 280 match the 'KMSKS' region motif; the sequence is KMSKS. An ATP-binding site is contributed by Lys-279.

It belongs to the class-I aminoacyl-tRNA synthetase family. In terms of assembly, monomer. It depends on Zn(2+) as a cofactor.

It is found in the cytoplasm. It carries out the reaction tRNA(Cys) + L-cysteine + ATP = L-cysteinyl-tRNA(Cys) + AMP + diphosphate. The polypeptide is Cysteine--tRNA ligase (Mycolicibacterium smegmatis (strain ATCC 700084 / mc(2)155) (Mycobacterium smegmatis)).